The following is a 122-amino-acid chain: Large ribosomal subunit protein uL18 (122 aa).

This sequence belongs to the universal ribosomal protein uL18 family. As to quaternary structure, part of the 50S ribosomal subunit; part of the 5S rRNA/L5/L18/L25 subcomplex. Contacts the 5S and 23S rRNAs.

Functionally, this is one of the proteins that bind and probably mediate the attachment of the 5S RNA into the large ribosomal subunit, where it forms part of the central protuberance. This chain is Large ribosomal subunit protein uL18, found in Dictyoglomus thermophilum (strain ATCC 35947 / DSM 3960 / H-6-12).